Here is a 208-residue protein sequence, read N- to C-terminus: LexA repressor (208 aa).

A DNA-binding region (H-T-H motif) is located at residues 29–49 (IREIGDSLNINSTSTVHNNIL). Catalysis depends on for autocatalytic cleavage activity residues serine 131 and lysine 168.

Belongs to the peptidase S24 family. In terms of assembly, homodimer.

It catalyses the reaction Hydrolysis of Ala-|-Gly bond in repressor LexA.. Its function is as follows. Represses a number of genes involved in the response to DNA damage (SOS response), including recA and lexA. In the presence of single-stranded DNA, RecA interacts with LexA causing an autocatalytic cleavage which disrupts the DNA-binding part of LexA, leading to derepression of the SOS regulon and eventually DNA repair. This is LexA repressor from Finegoldia magna (strain ATCC 29328 / DSM 20472 / WAL 2508) (Peptostreptococcus magnus).